The primary structure comprises 461 residues: MEKYVVVLAAGKGTRMKSKLYKVLHQVCGKAMVEHVVDAARAVKPSKIVTIVGHGAEDVEKVLAGKSEFVMQEEQLGTGHAVMQAEGQLAALEGATLVVTGDTPLFTSETFEKLFAYHEEEGNAATVLTAEAPDPFGYGRIIRDDQGNVLRIVEQKDGKPEELKVKEINTGVFCFDNQDLWAALKQVGNDNSQGEYYLTDVLEILRKAGKKVGAYKMPDFSESLGVNDRIALAEATRIMQRRINEGHMRDGVTFIDPATAYIDADVEIGNDTVIEGGVTIKVHTVIGSDCLITSGSRIVDSQIGNGVTVTSSTIEESIMEDNTDIGPNSHLRPKSLIKRGAHLGNFVEVKKAEIGENTKVGHLTYVGDATLGKDINVGCGVIFSNFDGVKKFHTTVGDKSFIGAGSTLVSPINVADHAFIAADSTITKDVGKYEMAIARGRQVNKKDYWHKLPLSEDEEWK.

The segment at Met-1 to Arg-229 is pyrophosphorylase. Residues Leu-8–Gly-11, Lys-22, Gln-72, and Gly-77–Thr-78 each bind UDP-N-acetyl-alpha-D-glucosamine. Residue Asp-102 participates in Mg(2+) binding. UDP-N-acetyl-alpha-D-glucosamine-binding residues include Gly-139, Glu-154, Asn-169, and Asn-227. Residue Asn-227 participates in Mg(2+) binding. Positions Ile-230–Asp-250 are linker. Positions Gly-251 to Lys-461 are N-acetyltransferase. Arg-332 and Lys-350 together coordinate UDP-N-acetyl-alpha-D-glucosamine. The active-site Proton acceptor is the His-362. Tyr-365 and Asn-376 together coordinate UDP-N-acetyl-alpha-D-glucosamine. Acetyl-CoA contacts are provided by Ala-422 and Arg-439.

This sequence in the N-terminal section; belongs to the N-acetylglucosamine-1-phosphate uridyltransferase family. It in the C-terminal section; belongs to the transferase hexapeptide repeat family. Homotrimer. The cofactor is Mg(2+).

Its subcellular location is the cytoplasm. It catalyses the reaction alpha-D-glucosamine 1-phosphate + acetyl-CoA = N-acetyl-alpha-D-glucosamine 1-phosphate + CoA + H(+). The catalysed reaction is N-acetyl-alpha-D-glucosamine 1-phosphate + UTP + H(+) = UDP-N-acetyl-alpha-D-glucosamine + diphosphate. It participates in nucleotide-sugar biosynthesis; UDP-N-acetyl-alpha-D-glucosamine biosynthesis; N-acetyl-alpha-D-glucosamine 1-phosphate from alpha-D-glucosamine 6-phosphate (route II): step 2/2. Its pathway is nucleotide-sugar biosynthesis; UDP-N-acetyl-alpha-D-glucosamine biosynthesis; UDP-N-acetyl-alpha-D-glucosamine from N-acetyl-alpha-D-glucosamine 1-phosphate: step 1/1. The protein operates within bacterial outer membrane biogenesis; LPS lipid A biosynthesis. Catalyzes the last two sequential reactions in the de novo biosynthetic pathway for UDP-N-acetylglucosamine (UDP-GlcNAc). The C-terminal domain catalyzes the transfer of acetyl group from acetyl coenzyme A to glucosamine-1-phosphate (GlcN-1-P) to produce N-acetylglucosamine-1-phosphate (GlcNAc-1-P), which is converted into UDP-GlcNAc by the transfer of uridine 5-monophosphate (from uridine 5-triphosphate), a reaction catalyzed by the N-terminal domain. This chain is Bifunctional protein GlmU, found in Lactobacillus delbrueckii subsp. bulgaricus (strain ATCC 11842 / DSM 20081 / BCRC 10696 / JCM 1002 / NBRC 13953 / NCIMB 11778 / NCTC 12712 / WDCM 00102 / Lb 14).